Here is a 374-residue protein sequence, read N- to C-terminus: Carnitine monooxygenase oxygenase subunit (374 aa).

The Rieske domain maps to 47–155; that stretch reads WICVAHSSEL…LEEYAGFVFI (109 aa). 4 residues coordinate [2Fe-2S] cluster: cysteine 89, histidine 91, cysteine 109, and histidine 112. Positions 211, 216, and 325 each coordinate Fe cation.

The protein belongs to the bacterial ring-hydroxylating dioxygenase alpha subunit family. CntA subfamily. In terms of assembly, composed of an oxygenase subunit and a reductase subunit. [2Fe-2S] cluster is required as a cofactor. Requires Fe cation as cofactor.

It carries out the reaction (R)-carnitine + NADH + O2 + H(+) = (3R)-3-hydroxy-4-oxobutanoate + trimethylamine + NAD(+) + H2O. It catalyses the reaction (R)-carnitine + NADPH + O2 + H(+) = (3R)-3-hydroxy-4-oxobutanoate + trimethylamine + NADP(+) + H2O. It participates in amine and polyamine metabolism; carnitine metabolism. Functionally, converts carnitine to trimethylamine and malic semialdehyde. This is Carnitine monooxygenase oxygenase subunit (yeaW) from Escherichia coli O157:H7.